A 148-amino-acid polypeptide reads, in one-letter code: Small ribosomal subunit protein bS6 (148 aa).

Residues 96 to 148 (HEEGQSAMLTRRDDRRERDGDDRPRRREGGFDRGDRGDRGPRRPRDNEAGEGA) are disordered.

The protein belongs to the bacterial ribosomal protein bS6 family.

Binds together with bS18 to 16S ribosomal RNA. This chain is Small ribosomal subunit protein bS6, found in Brucella abortus biovar 1 (strain 9-941).